A 209-amino-acid polypeptide reads, in one-letter code: Testis development-related protein (209 aa).

Positions 126-183 (KADEIEGWEPPHITVEESPTFPDDGLDDPNSWPGWEDETKGSTKYTNLTSSGNSSRWS) are disordered. Over residues 167–183 (STKYTNLTSSGNSSRWS) the composition is skewed to polar residues.

Belongs to the TDRP family.

Its subcellular location is the nucleus. The protein resides in the cytoplasm. This is Testis development-related protein (tdrp) from Xenopus laevis (African clawed frog).